We begin with the raw amino-acid sequence, 421 residues long: Glucose-1-phosphate adenylyltransferase (421 aa).

Alpha-D-glucose 1-phosphate-binding positions include Tyr-108, Gly-173, 188–189 (EK), and Ser-206.

It belongs to the bacterial/plant glucose-1-phosphate adenylyltransferase family. As to quaternary structure, homotetramer.

It catalyses the reaction alpha-D-glucose 1-phosphate + ATP + H(+) = ADP-alpha-D-glucose + diphosphate. It functions in the pathway glycan biosynthesis; glycogen biosynthesis. In terms of biological role, involved in the biosynthesis of ADP-glucose, a building block required for the elongation reactions to produce glycogen. Catalyzes the reaction between ATP and alpha-D-glucose 1-phosphate (G1P) to produce pyrophosphate and ADP-Glc. In Mesorhizobium japonicum (strain LMG 29417 / CECT 9101 / MAFF 303099) (Mesorhizobium loti (strain MAFF 303099)), this protein is Glucose-1-phosphate adenylyltransferase.